Here is a 426-residue protein sequence, read N- to C-terminus: Glutamate-1-semialdehyde 2,1-aminomutase (426 aa).

Residue lysine 265 is modified to N6-(pyridoxal phosphate)lysine.

It belongs to the class-III pyridoxal-phosphate-dependent aminotransferase family. HemL subfamily. As to quaternary structure, homodimer. The cofactor is pyridoxal 5'-phosphate.

It localises to the cytoplasm. It carries out the reaction (S)-4-amino-5-oxopentanoate = 5-aminolevulinate. It participates in porphyrin-containing compound metabolism; protoporphyrin-IX biosynthesis; 5-aminolevulinate from L-glutamyl-tRNA(Glu): step 2/2. This is Glutamate-1-semialdehyde 2,1-aminomutase from Pectobacterium atrosepticum (strain SCRI 1043 / ATCC BAA-672) (Erwinia carotovora subsp. atroseptica).